The primary structure comprises 96 residues: uncharacterized protein (96 aa).

2 consecutive transmembrane segments (helical) span residues 27 to 47 (LAFR…ALLI) and 50 to 70 (LSGV…SIVF).

Its subcellular location is the cell membrane. This is an uncharacterized protein from Haemophilus influenzae (strain ATCC 51907 / DSM 11121 / KW20 / Rd).